The following is a 423-amino-acid chain: Cyclin-dependent kinase 14 (423 aa).

3 positions are modified to phosphoserine: Ser-32, Ser-49, and Ser-88. Residues Ser-49–Lys-64 are compositionally biased toward polar residues. Residues Ser-49–Asp-87 form a disordered region. One can recognise a Protein kinase domain in the interval Tyr-89 to Phe-373. ATP-binding positions include Leu-95–Val-103 and Lys-118. Asp-210 functions as the Proton acceptor in the catalytic mechanism. Residues Glu-403–His-423 form a disordered region. A compositionally biased stretch (polar residues) spans Lys-410 to His-423.

Belongs to the protein kinase superfamily. CMGC Ser/Thr protein kinase family. CDC2/CDKX subfamily. In terms of assembly, found in a complex with LRP6, CCNY and CAPRIN2 during G2/M stage; CAPRIN2 functions as a scaffold for the complex by binding to CCNY via its N terminus and to CDK14 via its C terminus. Interacts with CCNY; CCNY mediates its recruitment to the plasma membrane and promotes phosphorylation of LRP6. Interacts with CCDN3 and CDKN1A. Interacts with SEPT8. Interacts with 14-3-3 proteina YWHAB, YWHAE, YWHAH and YWHAQ.

Its subcellular location is the cell membrane. The protein localises to the cytoplasm. It localises to the nucleus. The catalysed reaction is L-seryl-[protein] + ATP = O-phospho-L-seryl-[protein] + ADP + H(+). The enzyme catalyses L-threonyl-[protein] + ATP = O-phospho-L-threonyl-[protein] + ADP + H(+). With respect to regulation, serine/threonine-protein kinase activity is promoted by associated cyclins CCDN3 and CCNY and repressed by CDKN1A. In terms of biological role, serine/threonine-protein kinase involved in the control of the eukaryotic cell cycle, whose activity is controlled by an associated cyclin. Acts as a cell-cycle regulator of Wnt signaling pathway during G2/M phase by mediating the phosphorylation of LRP6 at 'Ser-1490', leading to the activation of the Wnt signaling pathway. Acts as a regulator of cell cycle progression and cell proliferation via its interaction with CCDN3. Phosphorylates RB1 in vitro, however the relevance of such result remains to be confirmed in vivo. May also play a role in meiosis, neuron differentiation and may indirectly act as a negative regulator of insulin-responsive glucose transport. This Callithrix jacchus (White-tufted-ear marmoset) protein is Cyclin-dependent kinase 14 (CDK14).